The primary structure comprises 456 residues: Exodeoxyribonuclease 7 large subunit (456 aa).

The protein belongs to the XseA family. As to quaternary structure, heterooligomer composed of large and small subunits.

It localises to the cytoplasm. It catalyses the reaction Exonucleolytic cleavage in either 5'- to 3'- or 3'- to 5'-direction to yield nucleoside 5'-phosphates.. In terms of biological role, bidirectionally degrades single-stranded DNA into large acid-insoluble oligonucleotides, which are then degraded further into small acid-soluble oligonucleotides. The sequence is that of Exodeoxyribonuclease 7 large subunit from Shigella boydii serotype 18 (strain CDC 3083-94 / BS512).